The following is a 77-amino-acid chain: Acyl carrier protein (77 aa).

Residues 2–77 (ADALERVTKI…DAVNYINSKQ (76 aa)) enclose the Carrier domain. Ser37 carries the O-(pantetheine 4'-phosphoryl)serine modification.

The protein belongs to the acyl carrier protein (ACP) family. Post-translationally, 4'-phosphopantetheine is transferred from CoA to a specific serine of apo-ACP by AcpS. This modification is essential for activity because fatty acids are bound in thioester linkage to the sulfhydryl of the prosthetic group.

The protein resides in the cytoplasm. It participates in lipid metabolism; fatty acid biosynthesis. Its function is as follows. Carrier of the growing fatty acid chain in fatty acid biosynthesis. In Bacillus licheniformis (strain ATCC 14580 / DSM 13 / JCM 2505 / CCUG 7422 / NBRC 12200 / NCIMB 9375 / NCTC 10341 / NRRL NRS-1264 / Gibson 46), this protein is Acyl carrier protein.